The following is a 161-amino-acid chain: SsrA-binding protein (161 aa).

This sequence belongs to the SmpB family.

It localises to the cytoplasm. Required for rescue of stalled ribosomes mediated by trans-translation. Binds to transfer-messenger RNA (tmRNA), required for stable association of tmRNA with ribosomes. tmRNA and SmpB together mimic tRNA shape, replacing the anticodon stem-loop with SmpB. tmRNA is encoded by the ssrA gene; the 2 termini fold to resemble tRNA(Ala) and it encodes a 'tag peptide', a short internal open reading frame. During trans-translation Ala-aminoacylated tmRNA acts like a tRNA, entering the A-site of stalled ribosomes, displacing the stalled mRNA. The ribosome then switches to translate the ORF on the tmRNA; the nascent peptide is terminated with the 'tag peptide' encoded by the tmRNA and targeted for degradation. The ribosome is freed to recommence translation, which seems to be the essential function of trans-translation. The protein is SsrA-binding protein of Vibrio vulnificus (strain YJ016).